Reading from the N-terminus, the 317-residue chain is Tyrosine--tRNA ligase (317 aa).

Position 33 (Tyr-33) interacts with L-tyrosine. Residues 38–46 (PSGKIHMGH) carry the 'HIGH' region motif. Tyr-155, Gln-159, Asp-162, and Gln-177 together coordinate L-tyrosine. The short motif at 211–215 (KMSSS) is the 'KMSKS' region element. Ser-214 is a binding site for ATP.

This sequence belongs to the class-I aminoacyl-tRNA synthetase family. TyrS type 3 subfamily. As to quaternary structure, homodimer.

The protein localises to the cytoplasm. The catalysed reaction is tRNA(Tyr) + L-tyrosine + ATP = L-tyrosyl-tRNA(Tyr) + AMP + diphosphate + H(+). Its function is as follows. Catalyzes the attachment of tyrosine to tRNA(Tyr) in a two-step reaction: tyrosine is first activated by ATP to form Tyr-AMP and then transferred to the acceptor end of tRNA(Tyr). This is Tyrosine--tRNA ligase from Methanococcoides burtonii (strain DSM 6242 / NBRC 107633 / OCM 468 / ACE-M).